Reading from the N-terminus, the 427-residue chain is MSIVIIGSGQAGFEAAVSLRSHGFSGTITLVGDEPGVPYQRPPLSKAYLHSDPDRESLALRPAQYFDDHRITLTCGKPVVRIDRDAQRVELIDATAIEYDHLILATGARNRLLPVPGANLPGVHYLRTAGEAESLTSSMASCSSLVVIGAGFIGLEVAAAARKKGLDVTVVEAMDRPMARALSSVMSGYFSTAHTEHGVHMRLSTGVKTINAADGRAAGVTTNSGDVIHADAVVVGIGVVPNIELAALTGLPVDNGIVVDEYLRTPDENISAIGDCAAYPIPGKAGLVRLESVQNAVDQARCLAAQLTGTSTHYRSVPWFWSEQYESKLQMAGLTAGADTHVVRGSVDSGVFSIFCFLGTRLLGVESVNKPRDHMAARKILATEMPLTPEQAADTDFDLKLAIARHKDTHKDEVASADIGERQVVAS.

Serine 2–glutamate 34 provides a ligand contact to FAD. Serine 144–glutamate 172 contacts NAD(+).

It belongs to the FAD-dependent oxidoreductase family. FAD serves as cofactor.

The degradation of the thiocarbamate herbicide EPTC by cytochrome CYP116 (thcB) requires the participation of a flavoprotein, rhodocoxin reductase, and an iron-sulfur protein, rhodocoxin, to mediate the transfer of electrons from NADH to P450 for oxygen activation. The protein is Rhodocoxin reductase (thcD) of Rhodococcus erythropolis (Arthrobacter picolinophilus).